The primary structure comprises 545 residues: CTP synthase (545 aa).

The amidoligase domain stretch occupies residues 1 to 266; that stretch reads MKTNYIFVTG…DDYICKRFSL (266 aa). A CTP-binding site is contributed by S14. S14 lines the UTP pocket. ATP-binding positions include 15 to 20 and D72; that span reads SLGKGI. Mg(2+)-binding residues include D72 and E140. CTP-binding positions include 147-149, 187-192, and K223; these read DIE and KTKPTQ. UTP contacts are provided by residues 187–192 and K223; that span reads KTKPTQ. ATP is bound at residue 239–241; it reads KDV. The 252-residue stretch at 291 to 542 folds into the Glutamine amidotransferase type-1 domain; the sequence is TIGMVGKYVE…VKAAFDYQKG (252 aa). Position 352 (G352) interacts with L-glutamine. The active-site Nucleophile; for glutamine hydrolysis is the C379. L-glutamine contacts are provided by residues 380 to 383, E403, and R470; that span reads LGMQ. Catalysis depends on residues H515 and E517.

It belongs to the CTP synthase family. Homotetramer.

The enzyme catalyses UTP + L-glutamine + ATP + H2O = CTP + L-glutamate + ADP + phosphate + 2 H(+). The catalysed reaction is L-glutamine + H2O = L-glutamate + NH4(+). It carries out the reaction UTP + NH4(+) + ATP = CTP + ADP + phosphate + 2 H(+). The protein operates within pyrimidine metabolism; CTP biosynthesis via de novo pathway; CTP from UDP: step 2/2. With respect to regulation, allosterically activated by GTP, when glutamine is the substrate; GTP has no effect on the reaction when ammonia is the substrate. The allosteric effector GTP functions by stabilizing the protein conformation that binds the tetrahedral intermediate(s) formed during glutamine hydrolysis. Inhibited by the product CTP, via allosteric rather than competitive inhibition. Catalyzes the ATP-dependent amination of UTP to CTP with either L-glutamine or ammonia as the source of nitrogen. Regulates intracellular CTP levels through interactions with the four ribonucleotide triphosphates. In Proteus mirabilis (strain HI4320), this protein is CTP synthase.